The chain runs to 248 residues: Flagellar L-ring protein (248 aa).

Residues 1-23 (MRHAFRHSVRTLGLLGLLPVLSA) form the signal peptide. A lipid anchor (N-palmitoyl cysteine) is attached at C24. Residue C24 is the site of S-diacylglycerol cysteine attachment.

It belongs to the FlgH family. In terms of assembly, the basal body constitutes a major portion of the flagellar organelle and consists of four rings (L,P,S, and M) mounted on a central rod.

The protein resides in the cell outer membrane. Its subcellular location is the bacterial flagellum basal body. Assembles around the rod to form the L-ring and probably protects the motor/basal body from shearing forces during rotation. This Gluconobacter oxydans (strain 621H) (Gluconobacter suboxydans) protein is Flagellar L-ring protein.